A 347-amino-acid chain; its full sequence is Syntaxin-32 (347 aa).

At 1–325 (MSARHGQSSY…RYLNSISSNR (325 aa)) the chain is on the cytoplasmic side. Disordered regions lie at residues 172-191 (HESRRQLFSSNASKESTNPF) and 208-251 (PLPW…QQMV). Composition is skewed to polar residues over residues 177–191 (QLFSSNASKESTNPF) and 213–222 (NGSSSSSSQL). The span at 237 to 249 (QQSQQQQQQQQQQ) shows a compositional bias: low complexity. The t-SNARE coiled-coil homology domain occupies 255 to 317 (DTYMQGRAEA…EGAQSQLARY (63 aa)). Residues 326 to 346 (WLMMKIFFVLIAFLMIFLFFV) form a helical; Anchor for type IV membrane protein membrane-spanning segment. Ala-347 is a topological domain (vesicular).

The protein belongs to the syntaxin family. Part of the t-SNARE complex.

The protein localises to the golgi apparatus. It is found in the cis-Golgi network membrane. Vesicle trafficking protein that functions in the secretory pathway. The polypeptide is Syntaxin-32 (SYP32) (Arabidopsis thaliana (Mouse-ear cress)).